A 285-amino-acid chain; its full sequence is Diphthine methyl ester synthase (285 aa).

Residues Leu-9, Asp-84, Gly-87, 112-113, Leu-163, Val-221, and His-246 each bind S-adenosyl-L-methionine; that span reads SI.

The protein belongs to the diphthine synthase family.

Its subcellular location is the cytoplasm. The catalysed reaction is 2-[(3S)-amino-3-carboxypropyl]-L-histidyl-[translation elongation factor 2] + 4 S-adenosyl-L-methionine = diphthine methyl ester-[translation elongation factor 2] + 4 S-adenosyl-L-homocysteine + 3 H(+). The protein operates within protein modification; peptidyl-diphthamide biosynthesis. S-adenosyl-L-methionine-dependent methyltransferase that catalyzes four methylations of the modified target histidine residue in translation elongation factor 2 (EF-2), to form an intermediate called diphthine methyl ester. The four successive methylation reactions represent the second step of diphthamide biosynthesis. In Aspergillus fumigatus (strain ATCC MYA-4609 / CBS 101355 / FGSC A1100 / Af293) (Neosartorya fumigata), this protein is Diphthine methyl ester synthase (dph5).